The primary structure comprises 634 residues: Threonine--tRNA ligase (634 aa).

A TGS domain is found at 1-61; that stretch reads MINIRFPDGS…NSNCELRLIT (61 aa). Residues 241–532 form a catalytic region; it reads DHRKIGKVLD…LIEHYAGNLP (292 aa). Positions 332, 383, and 509 each coordinate Zn(2+).

It belongs to the class-II aminoacyl-tRNA synthetase family. Homodimer. The cofactor is Zn(2+).

The protein localises to the cytoplasm. It carries out the reaction tRNA(Thr) + L-threonine + ATP = L-threonyl-tRNA(Thr) + AMP + diphosphate + H(+). Functionally, catalyzes the attachment of threonine to tRNA(Thr) in a two-step reaction: L-threonine is first activated by ATP to form Thr-AMP and then transferred to the acceptor end of tRNA(Thr). Also edits incorrectly charged L-seryl-tRNA(Thr). The protein is Threonine--tRNA ligase of Francisella tularensis subsp. holarctica (strain OSU18).